The sequence spans 166 residues: Large ribosomal subunit protein eL14 (166 aa).

The tract at residues 135 to 166 (KADGTPRVLKKDRRERLRAEKAKGGKKAAAKK) is disordered. Residues 146-157 (DRRERLRAEKAK) are compositionally biased toward basic and acidic residues.

It belongs to the eukaryotic ribosomal protein eL14 family.

This chain is Large ribosomal subunit protein eL14 (RpL14), found in Drosophila melanogaster (Fruit fly).